The chain runs to 380 residues: Type 4 apparatus protein DotM (380 aa).

A run of 2 helical transmembrane segments spans residues 18–38 and 99–119; these read MAPV…WALA and YPVI…NVTL.

The T4BSS is a complex nanomachine composed of several subcomplexes. This subunit is part of the Type IV Coupling Complex (T4CC), a subcomplex composed of the DotLMNYZ core and the IcmSW-LvgA adapter subunits, linked by the C-terminal tail of DotL. Six DotLMNYZ hetero-pentameric units may assemble into a hexameric nanomachine, forming an inner membrane channel for effectors to pass through. Interacts directly with DotL.

It localises to the cell inner membrane. Component of the Dot/Icm type IVB secretion system (T4BSS), which is used to inject bacterial effector proteins into eukaryotic host cells. Part of a subcomplex which recruits effector proteins and delivers them to the core transmembrane subcomplex. Forms the interacting surface for recruitment of acidic Glu-rich motif-containing effectors. The protein is Type 4 apparatus protein DotM of Legionella pneumophila subsp. pneumophila (strain Philadelphia 1 / ATCC 33152 / DSM 7513).